The chain runs to 93 residues: Large ribosomal subunit protein uL23 (93 aa).

This sequence belongs to the universal ribosomal protein uL23 family. Part of the 50S ribosomal subunit. Contacts protein L29, and trigger factor when it is bound to the ribosome.

Its function is as follows. One of the early assembly proteins it binds 23S rRNA. One of the proteins that surrounds the polypeptide exit tunnel on the outside of the ribosome. Forms the main docking site for trigger factor binding to the ribosome. This Opitutus terrae (strain DSM 11246 / JCM 15787 / PB90-1) protein is Large ribosomal subunit protein uL23.